A 142-amino-acid polypeptide reads, in one-letter code: Hemoglobin subunit alpha-1 (142 aa).

The residue at position 1 (Ser-1) is an N-acetylserine. Residues 1 to 142 enclose the Globin domain; that stretch reads SLSDKDKAAV…VALALAERYR (142 aa). His-59 is an O2 binding site. His-88 contributes to the heme b binding site.

This sequence belongs to the globin family. Hb1 is a heterotetramer of two alpha-2 chains and two beta chains, while Hb2 is a heterotetramer of two alpha-2 chains and two beta chains. As to expression, red blood cells.

Its function is as follows. Involved in oxygen transport from gills to the various peripheral tissues. The protein is Hemoglobin subunit alpha-1 (hba1) of Notothenia angustata (Rockcod).